A 281-amino-acid polypeptide reads, in one-letter code: NADH-cytochrome b5 reductase 1 (281 aa).

Residues 2-22 (VPGKFIFTATFVLLCTIIAVV) form a helical membrane-spanning segment. An FAD-binding FR-type domain is found at 37-141 (EKLQEFPLVA…RGPKGFYHYQ (105 aa)). Residues 121 to 136 (AQLN…GPKG) and 147 to 179 (EIGM…KVSL) contribute to the FAD site.

The protein belongs to the flavoprotein pyridine nucleotide cytochrome reductase family. In terms of assembly, monomer. Component of the 2-(3-amino-3-carboxypropyl)histidine synthase complex composed of DPH1, DPH2, DPH3 and a NADH-dependent reductase, predominantly CBR1. Requires FAD as cofactor.

The protein resides in the mitochondrion outer membrane. The enzyme catalyses 2 Fe(III)-[cytochrome b5] + NADH = 2 Fe(II)-[cytochrome b5] + NAD(+) + H(+). The catalysed reaction is 2 Fe(3+)-[Dph3] + NADH = 2 Fe(2+)-[Dph3] + NAD(+) + H(+). The protein operates within protein modification; peptidyl-diphthamide biosynthesis. Functionally, NADH-dependent reductase for DPH3 and cytochrome b5. Required for the first step of diphthamide biosynthesis, a post-translational modification of histidine which occurs in elongation factor 2. DPH1 and DPH2 transfer a 3-amino-3-carboxypropyl (ACP) group from S-adenosyl-L-methionine (SAM) to a histidine residue, the reaction is assisted by a reduction system comprising DPH3 and a NADH-dependent reductase, predominantly CBR1. By reducing DPH3, also involved in the formation of the tRNA wobble base modification mcm5s 2U (5-methoxycarbonylmethyl-2-thiouridine), mediated by the elongator complex. The cytochrome b5/NADH cytochrome b5 reductase electron transfer system supports the catalytic activity of several sterol biosynthetic enzymes. The protein is NADH-cytochrome b5 reductase 1 (CBR1) of Kluyveromyces lactis (strain ATCC 8585 / CBS 2359 / DSM 70799 / NBRC 1267 / NRRL Y-1140 / WM37) (Yeast).